Here is a 492-residue protein sequence, read N- to C-terminus: Beclin 1-associated autophagy-related key regulator (492 aa).

A Phosphoserine modification is found at Ser29. Positions 43 to 58 (CPLCNTTRRRLTCAKC) are cysteine repeats. Residues 71–180 (DRERFIDKKE…KLGDLVEKKT (110 aa)) are a coiled coil. Residues 410–473 (PGVAGESDES…PIASSSAGGM (64 aa)) form a disordered region. The tract at residues 413–492 (AGESDESGDE…SWFKAYTGHR (80 aa)) is BATS. The span at 415–433 (ESDESGDERVSDEETDLGT) shows a compositional bias: acidic residues. A Phosphoserine modification is found at Ser416. The residue at position 429 (Thr429) is a Phosphothreonine. Low complexity predominate over residues 448–473 (SQSVEVSQSQSTQASPPIASSSAGGM).

Belongs to the ATG14 family. In terms of assembly, forms homooligomers; homo-oligomerization is essential for the roles in membrane tethering and enhancement of SNARE-mediated fusion. Component of the PI3K (PI3KC3/PI3K-III/class III phosphatidylinositol 3-kinase) complex I (PI3KC3-C1) in which the core composed of the catalytic subunit PIK3C3, the regulatory subunit PIK3R4 and BECN1 is associated with ATG14. PI3KC3-C1 displays a V-shaped architecture with PIK3R4 serving as a bridge between PIK3C3 and the ATG14:BECN1 subcomplex. PI3KC3-C1 can associate with further regulatory subunits. Interacts with PIK3CB. Interacts (via coiled-coil domain) with BECN2 (via coiled-coil domain); this interaction is tighter than BECN2 self-association. Interacts with the STX17-SNAP29 binary t-SNARE complex. Interacts with NRBF2. Interacts with PIK3C3 and BECN1; this interaction is increased in the absence of TMEM39A. Interacts with STEEP1; the interaction is required for trafficking of STING1 from the endoplasmic reticulum. Interacts with ARMC3 (via ARM domains). Post-translationally, ubiquitinated via 'Lys-6', 'Lys-11' and 'Lys-63'-linked polyubiquitin chains on multiple lysines by MARCHF7, leading to ATG14 aggregation and loss of interaction with STX17.

Its subcellular location is the cytoplasm. The protein localises to the endoplasmic reticulum membrane. It localises to the preautophagosomal structure membrane. It is found in the cytoplasmic vesicle. The protein resides in the autophagosome membrane. Functionally, required for both basal and inducible autophagy. Determines the localization of the autophagy-specific PI3-kinase complex PI3KC3-C1. Plays a role in autophagosome formation and MAP1LC3/LC3 conjugation to phosphatidylethanolamine. Promotes BECN1 translocation from the trans-Golgi network to autophagosomes. Enhances PIK3C3 activity in a BECN1-dependent manner. Essential for the autophagy-dependent phosphorylation of BECN1. Stimulates the phosphorylation of BECN1, but suppresses the phosphorylation PIK3C3 by AMPK. Binds to STX17-SNAP29 binary t-SNARE complex on autophagosomes and primes it for VAMP8 interaction to promote autophagosome-endolysosome fusion. Modulates the hepatic lipid metabolism. This Homo sapiens (Human) protein is Beclin 1-associated autophagy-related key regulator.